Consider the following 231-residue polypeptide: 6-phosphogluconolactonase (231 aa).

Belongs to the glucosamine/galactosamine-6-phosphate isomerase family. 6-phosphogluconolactonase subfamily.

The catalysed reaction is 6-phospho-D-glucono-1,5-lactone + H2O = 6-phospho-D-gluconate + H(+). It functions in the pathway carbohydrate degradation; pentose phosphate pathway; D-ribulose 5-phosphate from D-glucose 6-phosphate (oxidative stage): step 2/3. In terms of biological role, hydrolysis of 6-phosphogluconolactone to 6-phosphogluconate. The chain is 6-phosphogluconolactonase (pgl) from Neisseria meningitidis serogroup A / serotype 4A (strain DSM 15465 / Z2491).